Here is a 353-residue protein sequence, read N- to C-terminus: Heterogeneous nuclear ribonucleoprotein D0 (353 aa).

Residues 1–89 (MSEEQFGGDG…SSPRHTEAAT (89 aa)) are disordered. The residue at position 2 (serine 2) is an N-acetylserine. Low complexity predominate over residues 11–42 (AAAAATAAVGGSAGEQEGAMVAAAQGAAAAAG). Gly residues predominate over residues 43–56 (SGSGGGSAPGGTEG). Positions 62-71 (EGAKIDASKN) are enriched in basic and acidic residues. At serine 69 the chain carries Phosphoserine. Lysine 70 participates in a covalent cross-link: Glycyl lysine isopeptide (Lys-Gly) (interchain with G-Cter in SUMO2). Residues serine 78, serine 80, and serine 81 each carry the phosphoserine modification. Phosphothreonine is present on threonine 89. RRM domains are found at residues 95 to 177 (WKMF…KTKE) and 180 to 259 (KKIF…MSKE). Lysine 117 bears the N6-methyllysine mark. Threonine 125 carries the post-translational modification Phosphothreonine. Lysine 127 is covalently cross-linked (Glycyl lysine isopeptide (Lys-Gly) (interchain with G-Cter in SUMO2)). Lysine 163 carries the post-translational modification N6-acetyllysine. Serine 188 is modified (phosphoserine). At threonine 191 the chain carries Phosphothreonine. Lysine 195 is covalently cross-linked (Glycyl lysine isopeptide (Lys-Gly) (interchain with G-Cter in SUMO2)). Lysine 241 and lysine 249 each carry N6-acetyllysine. At serine 269 the chain carries Phosphoserine. An omega-N-methylarginine mark is found at arginine 270, arginine 276, arginine 278, and arginine 280. An Asymmetric dimethylarginine; alternate modification is found at arginine 343. Arginine 343 carries the post-translational modification Dimethylated arginine; alternate. Arginine 343 bears the Omega-N-methylarginine; alternate mark.

In terms of assembly, identified in a IGF2BP1-dependent mRNP granule complex containing untranslated mRNAs. Part of a complex associated with the FOS mCRD domain and consisting of PABPC1, PAIP1, CSDE1/UNR and SYNCRIP. Interacts with IGF2BP2. Interacts with GTPBP1. Interacts with EIF4G1; the interaction requires RNA. Interacts with EIF3B and RPS3. In terms of processing, methylated by PRMT1, in an insulin-dependent manner. The PRMT1-mediated methylation regulates its phosphorylation. Arg-343 is dimethylated, probably to asymmetric dimethylarginine.

It localises to the nucleus. It is found in the cytoplasm. Binds with high affinity to RNA molecules that contain AU-rich elements (AREs) found within the 3'-UTR of many proto-oncogenes and cytokine mRNAs. Also binds to double- and single-stranded DNA sequences in a specific manner and functions a transcription factor. Each of the RNA-binding domains specifically can bind solely to a single-stranded non-monotonous 5'-UUAG-3' sequence and also weaker to the single-stranded 5'-TTAGGG-3' telomeric DNA repeat. Binds RNA oligonucleotides with 5'-UUAGGG-3' repeats more tightly than the telomeric single-stranded DNA 5'-TTAGGG-3' repeats. Binding of RRM1 to DNA inhibits the formation of DNA quadruplex structure which may play a role in telomere elongation. May be involved in translationally coupled mRNA turnover. Implicated with other RNA-binding proteins in the cytoplasmic deadenylation/translational and decay interplay of the FOS mRNA mediated by the major coding-region determinant of instability (mCRD) domain. May play a role in the regulation of the rhythmic expression of circadian clock core genes. Directly binds to the 3'UTR of CRY1 mRNA and induces CRY1 rhythmic translation. May also be involved in the regulation of PER2 translation. In Rattus norvegicus (Rat), this protein is Heterogeneous nuclear ribonucleoprotein D0 (Hnrnpd).